The primary structure comprises 519 residues: Probable pectinesterase/pectinesterase inhibitor 36 (519 aa).

The N-terminal stretch at 1 to 25 (MSTFVKVTDLITIMFFLAIAAVITA) is a signal peptide. Positions 27–141 (NTAELDVLEM…TFVLHEALAF (115 aa)) are pectinesterase inhibitor 36. 2 N-linked (GlcNAc...) asparagine glycosylation sites follow: asparagine 92 and asparagine 130. The interval 147–196 (GHMKKRLHGPARQGHGPTRPKHRPTRPNHGPGRSHHGPSRPNQNGGMLVS) is disordered. Residues 164–184 (TRPKHRPTRPNHGPGRSHHGP) show a composition bias toward basic residues. Over residues 186 to 196 (RPNQNGGMLVS) the composition is skewed to polar residues. The pectinesterase 36 stretch occupies residues 205–505 (DFVVARDGSA…FTVSRFIQGD (301 aa)). Substrate contacts are provided by threonine 283 and glutamine 313. Catalysis depends on aspartate 336, which acts as the Proton donor; for pectinesterase activity. The Nucleophile; for pectinesterase activity role is filled by aspartate 357. Arginine 425 and tryptophan 427 together coordinate substrate.

It in the N-terminal section; belongs to the PMEI family. The protein in the C-terminal section; belongs to the pectinesterase family. In terms of tissue distribution, expressed in siliques.

Its subcellular location is the secreted. It is found in the cell wall. The catalysed reaction is [(1-&gt;4)-alpha-D-galacturonosyl methyl ester](n) + n H2O = [(1-&gt;4)-alpha-D-galacturonosyl](n) + n methanol + n H(+). It functions in the pathway glycan metabolism; pectin degradation; 2-dehydro-3-deoxy-D-gluconate from pectin: step 1/5. Acts in the modification of cell walls via demethylesterification of cell wall pectin. The protein is Probable pectinesterase/pectinesterase inhibitor 36 (PME36) of Arabidopsis thaliana (Mouse-ear cress).